The primary structure comprises 361 residues: MIERVRTDLYRIPLPTRLTDSTHGAMMDFELITVRIEDSDGATGLGYTYTVNHGGAAVATMVDKDLRGCLLGADAEQIEKIWQSMWWRLHYAGRGGHATSAISAVDIALWDLKGIRARTPLWKLFGGYDPVVPVYAGGIDLELPVADLKTQADRFLAGGFRAIKMKVGRPDLKEDVDRVSALREHLGDSFPLMVDANMKWTVDGAIRAARALAPFDLHWIEEPTIPDDLVGNARIVRESGHTIAGGENLHTLYDFHNAVRAGSLTLPEPDVSNIGGYTTFRKVAALAEANNMLLTSHGVHDLTVHALASVPHRTYMEAHGFGLHAYMAEPMAVTDGCVSAPDRPGHGVVLDFERLGRLAVG.

Residue Lys-166 is the Proton acceptor of the active site. Residues Asp-195, Glu-221, and Glu-247 each coordinate Mg(2+). The active-site Proton donor/acceptor is His-297.

This sequence belongs to the mandelate racemase/muconate lactonizing enzyme family. Mg(2+) serves as cofactor.

It carries out the reaction 3,6-anhydro-L-galactonate = 2-dehydro-3-deoxy-L-galactonate. In terms of biological role, involved in the degradation of 3,6-anhydro-L-galactose, which is the major monomeric sugar of red macroalgae. Catalyzes the isomerization of 3,6-anhydrogalactonate (AHGA) to 2-keto-3-deoxy-galactonate (KDGal). In Streptomyces coelicolor (strain ATCC BAA-471 / A3(2) / M145), this protein is 3,6-anhydro-alpha-L-galactonate cycloisomerase.